The sequence spans 375 residues: Transaldolase (375 aa).

K145 functions as the Schiff-base intermediate with substrate in the catalytic mechanism.

It belongs to the transaldolase family. Type 2 subfamily.

The protein localises to the cytoplasm. The catalysed reaction is D-sedoheptulose 7-phosphate + D-glyceraldehyde 3-phosphate = D-erythrose 4-phosphate + beta-D-fructose 6-phosphate. The protein operates within carbohydrate degradation; pentose phosphate pathway; D-glyceraldehyde 3-phosphate and beta-D-fructose 6-phosphate from D-ribose 5-phosphate and D-xylulose 5-phosphate (non-oxidative stage): step 2/3. Functionally, transaldolase is important for the balance of metabolites in the pentose-phosphate pathway. The chain is Transaldolase from Mycobacterium leprae (strain Br4923).